We begin with the raw amino-acid sequence, 154 residues long: Endoribonuclease YbeY (154 aa).

3 residues coordinate Zn(2+): His117, His121, and His127.

The protein belongs to the endoribonuclease YbeY family. Requires Zn(2+) as cofactor.

The protein resides in the cytoplasm. Its function is as follows. Single strand-specific metallo-endoribonuclease involved in late-stage 70S ribosome quality control and in maturation of the 3' terminus of the 16S rRNA. The protein is Endoribonuclease YbeY of Aromatoleum aromaticum (strain DSM 19018 / LMG 30748 / EbN1) (Azoarcus sp. (strain EbN1)).